The sequence spans 229 residues: Ribosome maturation factor RimM (229 aa).

Residues 148–229 enclose the PRC barrel domain; it reads ADEFYWVDLI…RVVVDWEADY (82 aa).

It belongs to the RimM family. In terms of assembly, binds ribosomal protein uS19.

It localises to the cytoplasm. Functionally, an accessory protein needed during the final step in the assembly of 30S ribosomal subunit, possibly for assembly of the head region. Essential for efficient processing of 16S rRNA. May be needed both before and after RbfA during the maturation of 16S rRNA. It has affinity for free ribosomal 30S subunits but not for 70S ribosomes. The protein is Ribosome maturation factor RimM of Burkholderia pseudomallei (strain 1710b).